The sequence spans 324 residues: Probable RuBisCO transcriptional regulator (324 aa).

The HTH lysR-type domain occupies 8 to 65; it reads FSLEQLRILKAIATEGSFKKAAESLYMTQPAISLQIQTLEKKLNIALFDRSGRRALMT. A DNA-binding region (H-T-H motif) is located at residues 25–44; it reads FKKAAESLYMTQPAISLQIQ.

Belongs to the LysR transcriptional regulatory family.

It localises to the plastid. Its subcellular location is the cyanelle. Trans-acting transcriptional regulator of RuBisCO genes (rbcL and rbcS) expression. The polypeptide is Probable RuBisCO transcriptional regulator (rbcR) (Cyanophora paradoxa).